A 39-amino-acid chain; its full sequence is Natriuretic peptide HsNP-a (39 aa).

A propeptide spanning residues 1–8 (SGSKTAKI) is cleaved from the precursor. A disulfide bond links Cys-12 and Cys-28.

The protein belongs to the natriuretic peptide family. As to expression, expressed by the venom gland.

It localises to the secreted. Snake venom natriuretic peptide that targets both NPR1 and NPR2. Exhibits hypotensive and vasodepressor activities. In Hoplocephalus stephensii (Stephens's banded snake), this protein is Natriuretic peptide HsNP-a.